The chain runs to 159 residues: Flagellar assembly factor FliW (159 aa).

Belongs to the FliW family. Interacts with translational regulator CsrA and flagellin(s).

It localises to the cytoplasm. Functionally, acts as an anti-CsrA protein, binds CsrA and prevents it from repressing translation of its target genes, one of which is flagellin. Binds to flagellin and participates in the assembly of the flagellum. The sequence is that of Flagellar assembly factor FliW from Geobacter sulfurreducens (strain ATCC 51573 / DSM 12127 / PCA).